The primary structure comprises 113 residues: Protein NATD1 (113 aa).

Residues 1-16 (MAQSPAAASPGAPEQG) are compositionally biased toward low complexity. The tract at residues 1 to 20 (MAQSPAAASPGAPEQGCPIR) is disordered. One can recognise an N-acetyltransferase domain in the interval 22–112 (EHDRRRRQFT…PLPQYLERLQ (91 aa)).

The protein belongs to the NATD1 family.

The protein is Protein NATD1 (NATD1) of Bos taurus (Bovine).